Here is a 174-residue protein sequence, read N- to C-terminus: Small ribosomal subunit protein uS7c (174 aa).

Belongs to the universal ribosomal protein uS7 family. Part of the 30S ribosomal subunit.

It is found in the plastid. It localises to the chloroplast. Its function is as follows. One of the primary rRNA binding proteins, it binds directly to 16S rRNA where it nucleates assembly of the head domain of the 30S subunit. This Stigeoclonium helveticum (Green alga) protein is Small ribosomal subunit protein uS7c (rps7).